Consider the following 549-residue polypeptide: Probable protein kinase UbiB (549 aa).

Positions aspartate 123–leucine 501 constitute a Protein kinase domain. ATP is bound by residues leucine 129 to valine 137 and lysine 152. Catalysis depends on aspartate 287, which acts as the Proton acceptor. Helical transmembrane passes span serine 498–glutamine 518 and isoleucine 519–glycine 539.

This sequence belongs to the ABC1 family. UbiB subfamily.

The protein localises to the cell inner membrane. Its pathway is cofactor biosynthesis; ubiquinone biosynthesis [regulation]. Is probably a protein kinase regulator of UbiI activity which is involved in aerobic coenzyme Q (ubiquinone) biosynthesis. The sequence is that of Probable protein kinase UbiB from Shewanella frigidimarina (strain NCIMB 400).